The primary structure comprises 308 residues: Lysophosphatidic acid receptor 6 (308 aa).

Over 1–16 the chain is Extracellular; that stretch reads MVSSNCSTEDSFKYTL. The N-linked (GlcNAc...) asparagine glycan is linked to Asn-5. A helical membrane pass occupies residues 17–43; the sequence is YGCVFSMVFVLGLIANCVAIYIFTFTL. Topologically, residues 44-52 are cytoplasmic; it reads KVRNETTTY. A helical transmembrane segment spans residues 53 to 76; the sequence is MLNLAISDLLFVFTLPFRIYYFVV. Residues 77 to 89 lie on the Extracellular side of the membrane; that stretch reads RNWPFGDVLCKIS. A disulfide bridge links Cys-86 with Cys-165. Residues 90–109 form a helical membrane-spanning segment; sequence VTLFYTNMYGSILFLTCISV. The Cytoplasmic segment spans residues 110 to 130; the sequence is DRFLAIVHPFRSKTLRTKRNA. The chain crosses the membrane as a helical span at residues 131–151; it reads RIVCVAVWITVLAGSTPASFF. Residues 152–178 lie on the Extracellular side of the membrane; the sequence is QSTNRQNNTEQRTCFENFPESTWKTYL. A helical transmembrane segment spans residues 179–206; sequence SRIVIFIEIVGFFIPLILNVTCSTMVLR. Over 207-224 the chain is Cytoplasmic; the sequence is TLNKPLTLSRNKLSKKKV. A helical transmembrane segment spans residues 225–250; sequence LKMIFVHLVIFCFCFVPYNITLILYS. Over 251–269 the chain is Extracellular; that stretch reads LMRTQTWINCSVVTAVRTM. A helical membrane pass occupies residues 270 to 289; it reads YPVTLCIAVSNCCFDPIVYY. Cys-281 carries S-palmitoyl cysteine lipidation. At 290-308 the chain is on the cytoplasmic side; sequence FTSDTNSELDKKQQVHQNT.

It belongs to the G-protein coupled receptor 1 family. Induced in activated T-cells.

Its subcellular location is the cell membrane. In terms of biological role, binds to oleoyl-L-alpha-lysophosphatidic acid (LPA). Intracellular cAMP is involved in the receptor activation. This is Lysophosphatidic acid receptor 6 (LPAR6) from Gallus gallus (Chicken).